A 271-amino-acid chain; its full sequence is Formamidopyrimidine-DNA glycosylase (271 aa).

Catalysis depends on proline 2, which acts as the Schiff-base intermediate with DNA. The active-site Proton donor is the glutamate 3. Lysine 57 (proton donor; for beta-elimination activity) is an active-site residue. DNA contacts are provided by histidine 90, arginine 109, and lysine 151. The segment at 236–270 adopts an FPG-type zinc-finger fold; that stretch reads HVYGRGGETCTQCGNLLSEIRLGQRTTVFCGICQT. Catalysis depends on arginine 260, which acts as the Proton donor; for delta-elimination activity.

The protein belongs to the FPG family. As to quaternary structure, monomer. Zn(2+) serves as cofactor.

The catalysed reaction is Hydrolysis of DNA containing ring-opened 7-methylguanine residues, releasing 2,6-diamino-4-hydroxy-5-(N-methyl)formamidopyrimidine.. It catalyses the reaction 2'-deoxyribonucleotide-(2'-deoxyribose 5'-phosphate)-2'-deoxyribonucleotide-DNA = a 3'-end 2'-deoxyribonucleotide-(2,3-dehydro-2,3-deoxyribose 5'-phosphate)-DNA + a 5'-end 5'-phospho-2'-deoxyribonucleoside-DNA + H(+). Functionally, involved in base excision repair of DNA damaged by oxidation or by mutagenic agents. Acts as a DNA glycosylase that recognizes and removes damaged bases. Has a preference for oxidized purines, such as 7,8-dihydro-8-oxoguanine (8-oxoG). Has AP (apurinic/apyrimidinic) lyase activity and introduces nicks in the DNA strand. Cleaves the DNA backbone by beta-delta elimination to generate a single-strand break at the site of the removed base with both 3'- and 5'-phosphates. In Shewanella sp. (strain MR-7), this protein is Formamidopyrimidine-DNA glycosylase.